The following is a 247-amino-acid chain: Uridylate kinase (247 aa).

14 to 17 (KLSG) serves as a coordination point for ATP. The tract at residues 22–27 (GERGVG) is involved in allosteric activation by GTP. A UMP-binding site is contributed by G56. Residues G57 and R61 each coordinate ATP. UMP contacts are provided by residues D76 and 137–144 (IGSPYFST). Residues N165, Y171, and D174 each contribute to the ATP site.

Belongs to the UMP kinase family. Homohexamer.

It localises to the cytoplasm. It catalyses the reaction UMP + ATP = UDP + ADP. Its pathway is pyrimidine metabolism; CTP biosynthesis via de novo pathway; UDP from UMP (UMPK route): step 1/1. Its activity is regulated as follows. Allosterically activated by GTP. Inhibited by UTP. Functionally, catalyzes the reversible phosphorylation of UMP to UDP. This Streptococcus pneumoniae (strain ATCC BAA-255 / R6) protein is Uridylate kinase.